A 264-amino-acid chain; its full sequence is Myozenin-2 (264 aa).

Residue Arg53 is modified to Omega-N-methylarginine. Positions 90-135 (GKVDGSNLEGGSQQAPLTPPNTPDPRSPPNPDNIAPGYSGPLKEIP) are disordered. The residue at position 101 (Ser101) is a Phosphoserine. The span at 106-120 (LTPPNTPDPRSPPNP) shows a compositional bias: pro residues. Phosphothreonine occurs at positions 107 and 111. Position 116 is a phosphoserine (Ser116).

This sequence belongs to the myozenin family. As to quaternary structure, interacts via its C-terminus with spectrin repeats 3 and 4 of ACTN2. Interacts with ACTN1, LDB3, MYOT and PPP3CA.

The protein resides in the cytoplasm. The protein localises to the myofibril. It localises to the sarcomere. Its subcellular location is the z line. Its function is as follows. Myozenins may serve as intracellular binding proteins involved in linking Z line proteins such as alpha-actinin, gamma-filamin, TCAP/telethonin, LDB3/ZASP and localizing calcineurin signaling to the sarcomere. Plays an important role in the modulation of calcineurin signaling. May play a role in myofibrillogenesis. This chain is Myozenin-2 (MYOZ2), found in Pongo abelii (Sumatran orangutan).